Consider the following 516-residue polypeptide: Nucleolar complex protein 4 homolog (516 aa).

3 consecutive transmembrane segments (helical) span residues 297–317, 347–367, and 375–395; these read ACDLGGALSLLALNGLFILIH, FFHLADLFLSSSHLPAYLVAA, and LALTAPPEALLMVLPFICNLL.

It belongs to the CBF/MAK21 family.

It localises to the nucleus membrane. It is found in the nucleus. The protein resides in the nucleolus. This chain is Nucleolar complex protein 4 homolog (NOC4L), found in Homo sapiens (Human).